Consider the following 319-residue polypeptide: ATP-dependent 6-phosphofructokinase (319 aa).

Residue G11 coordinates ATP. ADP is bound at residue 21–25; it reads RAVVR. Residues 72-73 and 102-105 each bind ATP; these read RC and GEGS. Residue E103 participates in Mg(2+) binding. 126 to 128 is a binding site for substrate; the sequence is TID. The active-site Proton acceptor is D128. Residue K155 participates in ADP binding. Substrate is bound by residues R163 and 170 to 172; that span reads MGR. ADP-binding positions include 186–188, R212, and 214–216; these read GAE and KIN. Substrate-binding positions include E223, R244, and 250–253; that span reads HVQR.

It belongs to the phosphofructokinase type A (PFKA) family. ATP-dependent PFK group I subfamily. Prokaryotic clade 'B1' sub-subfamily. Homotetramer. Mg(2+) serves as cofactor.

Its subcellular location is the cytoplasm. The catalysed reaction is beta-D-fructose 6-phosphate + ATP = beta-D-fructose 1,6-bisphosphate + ADP + H(+). The protein operates within carbohydrate degradation; glycolysis; D-glyceraldehyde 3-phosphate and glycerone phosphate from D-glucose: step 3/4. With respect to regulation, allosterically activated by ADP and other diphosphonucleosides, and allosterically inhibited by phosphoenolpyruvate. Catalyzes the phosphorylation of D-fructose 6-phosphate to fructose 1,6-bisphosphate by ATP, the first committing step of glycolysis. In Thermotoga neapolitana (strain ATCC 49049 / DSM 4359 / NBRC 107923 / NS-E), this protein is ATP-dependent 6-phosphofructokinase.